The sequence spans 212 residues: Thymidylate kinase (212 aa).

7–14 is an ATP binding site; the sequence is GIEGSGKS.

It belongs to the thymidylate kinase family.

It carries out the reaction dTMP + ATP = dTDP + ADP. Functionally, phosphorylation of dTMP to form dTDP in both de novo and salvage pathways of dTTP synthesis. This is Thymidylate kinase from Oleidesulfovibrio alaskensis (strain ATCC BAA-1058 / DSM 17464 / G20) (Desulfovibrio alaskensis).